The chain runs to 360 residues: tRNA N6-adenosine threonylcarbamoyltransferase (360 aa).

Histidine 115 and histidine 119 together coordinate Fe cation. Substrate contacts are provided by residues 137 to 141 (LVSGG), aspartate 170, glycine 183, and asparagine 283. Aspartate 311 lines the Fe cation pocket.

This sequence belongs to the KAE1 / TsaD family. Fe(2+) serves as cofactor.

The protein resides in the cytoplasm. It catalyses the reaction L-threonylcarbamoyladenylate + adenosine(37) in tRNA = N(6)-L-threonylcarbamoyladenosine(37) in tRNA + AMP + H(+). In terms of biological role, required for the formation of a threonylcarbamoyl group on adenosine at position 37 (t(6)A37) in tRNAs that read codons beginning with adenine. Is involved in the transfer of the threonylcarbamoyl moiety of threonylcarbamoyl-AMP (TC-AMP) to the N6 group of A37, together with TsaE and TsaB. TsaD likely plays a direct catalytic role in this reaction. The protein is tRNA N6-adenosine threonylcarbamoyltransferase of Sinorhizobium medicae (strain WSM419) (Ensifer medicae).